Here is a 381-residue protein sequence, read N- to C-terminus: Peptidoglycan transport system permease protein YejE (381 aa).

5 helical membrane-spanning segments follow: residues 38–58 (YWSFWLFLILFFLSLIAEFIA), 183–203 (VLFGLTLTIASALVGVTAGAI), 230–250 (ILLIIAAILPPGFFVLLGIML), 292–312 (LLPNAMVATLTFLPFILSGSI), and 347–367 (WLGLTAFFTMSIMLSLLIFVG). In terms of domain architecture, ABC transmembrane type-1 spans 179-371 (FRISVLFGLT…LLIFVGEAVR (193 aa)).

This sequence belongs to the binding-protein-dependent transport system permease family. As to quaternary structure, the complex is composed of one ATP-binding protein (YejF), two transmembrane proteins (YejB and YejE) and a solute-binding protein (YepA or YejA).

Its subcellular location is the cell inner membrane. Its function is as follows. Part of the ABC transporter complex YejBEF-YepA involved in the uptake of muropeptides, the breakdown products of cell wall peptidoglycan. The import of muropeptides into the cell enables peptidoglycan recycling, which is vital for cell wall integrity in this bacterium. Is also probably part of the ABC transporter complex YejABEF, which is likely involved in broad-spectrum peptide import. Responsible for the translocation of the substrate across the membrane. The chain is Peptidoglycan transport system permease protein YejE from Agrobacterium fabrum (strain C58 / ATCC 33970) (Agrobacterium tumefaciens (strain C58)).